The following is a 342-amino-acid chain: MTPHRFPANWFLKARLKLRHLQLFVALDEHRNLHRAAASLTMSQPAASKLLGDLEESLGVTLFERHGRGVEPNWYGGLMIRHARTILSGLQEAGEELNDLLAGHSGSVSIGTVMAPAVELVVPVITTLTRDHPDLKIAVAVETSDVLAERVRQGVMDFAIGRLPDHVDASCFDYQEISSEELCFVCRDGHPLLRLGRPLTAADLVDATWILQPLGSLLRSRVEALFRAEGVPPPRKVIESASPVISLAMVAENDSVTVFARALAQVFSPTGSCTIVPFHKRFSVEPYGIFWLKDRPLSPGARTALAALRAASDTKMRRALEMPQPSSSSDIEMCMDSANNRI.

The 58-residue stretch at 16 to 73 (LKLRHLQLFVALDEHRNLHRAAASLTMSQPAASKLLGDLEESLGVTLFERHGRGVEPN) folds into the HTH lysR-type domain. Positions 33–52 (LHRAAASLTMSQPAASKLLG) form a DNA-binding region, H-T-H motif.

Belongs to the LysR transcriptional regulatory family.

Its function is as follows. Does not seem to be required for sbpA expression. In Azospirillum brasilense, this protein is HTH-type transcriptional regulator GbpR (gbpR).